The chain runs to 31 residues: Cytochrome b6-f complex subunit 6 (31 aa).

The chain crosses the membrane as a helical span at residues 4-24 (ITSYFGFLLVALTITSALFIG).

This sequence belongs to the PetL family. As to quaternary structure, the 4 large subunits of the cytochrome b6-f complex are cytochrome b6, subunit IV (17 kDa polypeptide, PetD), cytochrome f and the Rieske protein, while the 4 small subunits are PetG, PetL, PetM and PetN. The complex functions as a dimer.

The protein localises to the plastid. It is found in the chloroplast thylakoid membrane. Functionally, component of the cytochrome b6-f complex, which mediates electron transfer between photosystem II (PSII) and photosystem I (PSI), cyclic electron flow around PSI, and state transitions. PetL is important for photoautotrophic growth as well as for electron transfer efficiency and stability of the cytochrome b6-f complex. The sequence is that of Cytochrome b6-f complex subunit 6 from Panax ginseng (Korean ginseng).